Reading from the N-terminus, the 87-residue chain is Phosphoribosyl-ATP pyrophosphatase (87 aa).

The protein belongs to the PRA-PH family.

The protein localises to the cytoplasm. The enzyme catalyses 1-(5-phospho-beta-D-ribosyl)-ATP + H2O = 1-(5-phospho-beta-D-ribosyl)-5'-AMP + diphosphate + H(+). It participates in amino-acid biosynthesis; L-histidine biosynthesis; L-histidine from 5-phospho-alpha-D-ribose 1-diphosphate: step 2/9. In Nocardia farcinica (strain IFM 10152), this protein is Phosphoribosyl-ATP pyrophosphatase.